The chain runs to 186 residues: UPF0397 protein lp_0150 (186 aa).

5 helical membrane passes run 12–32, 45–65, 76–96, 112–132, and 151–171; these read VVAT…VAIP, GFLA…AVFI, GSPW…FGLA, LVWF…LLAP, and VITW…LLVL.

Belongs to the UPF0397 family.

It is found in the cell membrane. In Lactiplantibacillus plantarum (strain ATCC BAA-793 / NCIMB 8826 / WCFS1) (Lactobacillus plantarum), this protein is UPF0397 protein lp_0150.